A 287-amino-acid chain; its full sequence is MAAISSLPFAALRRAADCRPSTAAAAAGAGAGAVVLSVRPRRGSRSVVRCVATAGDVPPTVAETKMNFLKSYKRPILSIYSTVLQELLVQQHLMRYKTTYQYDAVFALGFVTVYDQLMEGYPSNEDRDAIFKAYITALNEDPEQYRADAQKMEEWARSQNGNSLVEFSSKDGEIEAILKDISERAQGKGSFSYSRFFAVGLFRLLELANATEPTILDKLCAALNINKRSVDRDLDVYRNILSKLVQAKELLKEYVEREKKKREERSETPKSNEAVTKFDGSLNSMRH.

The Chloroplast intermembrane segment spans residues 1 to 190 (MAAISSLPFA…ISERAQGKGS (190 aa)). Residues 191-213 (FSYSRFFAVGLFRLLELANATEP) form a helical membrane-spanning segment. The Cytoplasmic segment spans residues 214–287 (TILDKLCAAL…FDGSLNSMRH (74 aa)). Positions 237 to 267 (YRNILSKLVQAKELLKEYVEREKKKREERSE) form a coiled coil. Over residues 256 to 270 (EREKKKREERSETPK) the composition is skewed to basic and acidic residues. The segment at 256–287 (EREKKKREERSETPKSNEAVTKFDGSLNSMRH) is disordered.

It belongs to the THF1 family.

The protein localises to the plastid. Its subcellular location is the chloroplast outer membrane. It is found in the chloroplast stroma. In terms of biological role, involved in a dynamic process of vesicle-mediated thylakoid membrane biogenesis. Required for the normal organization of vesicles into mature thylakoid stacks and ultimately for leaf development. The protein is Protein THYLAKOID FORMATION1, chloroplastic (THF1) of Oryza sativa subsp. japonica (Rice).